A 299-amino-acid chain; its full sequence is F-actin-capping protein subunit alpha-3 (299 aa).

A Phosphoserine modification is found at S290.

This sequence belongs to the F-actin-capping protein alpha subunit family. Component of the F-actin capping complex, composed of a heterodimer of an alpha and a beta subunit. Component of the WASH complex, composed of F-actin-capping protein subunit alpha (CAPZA1, CAPZA2 or CAPZA3), F-actin-capping protein subunit beta (CAPZB), WASHC1, WASHC2, WASHC3, WASHC4 and WASHC5.

In terms of biological role, F-actin-capping proteins bind in a Ca(2+)-independent manner to the fast growing ends of actin filaments (barbed end) thereby blocking the exchange of subunits at these ends. Unlike other capping proteins (such as gelsolin and severin), these proteins do not sever actin filaments. May play a role in the morphogenesis of spermatid. The sequence is that of F-actin-capping protein subunit alpha-3 (CAPZA3) from Macaca fascicularis (Crab-eating macaque).